The following is a 179-amino-acid chain: Protein P20B (179 aa).

The polypeptide is Protein P20B (Vitis vinifera (Grape)).